The chain runs to 217 residues: Proteasome subunit beta type-9 (217 aa).

The propeptide at 1–18 is removed in mature form; the sequence is MLEESSEPGWLSEEVKTG. Thr19 acts as the Nucleophile in catalysis.

This sequence belongs to the peptidase T1B family. The 26S proteasome consists of a 20S proteasome core and two 19S regulatory subunits. The 20S proteasome core is composed of 28 subunits that are arranged in four stacked rings, resulting in a barrel-shaped structure. The two end rings are each formed by seven alpha subunits, and the two central rings are each formed by seven beta subunits. The catalytic chamber with the active sites is on the inside of the barrel. Component of the immunoproteasome, where it displaces the equivalent housekeeping subunit PSMB6. In terms of processing, autocleaved. The resulting N-terminal Thr residue of the mature subunit is responsible for the nucleophile proteolytic activity.

The protein resides in the cytoplasm. It is found in the nucleus. It carries out the reaction Cleavage of peptide bonds with very broad specificity.. In terms of biological role, the proteasome is a multicatalytic proteinase complex which is characterized by its ability to cleave peptides with Arg, Phe, Tyr, Leu, and Glu adjacent to the leaving group at neutral or slightly basic pH. The proteasome has an ATP-dependent proteolytic activity. This subunit is involved in antigen processing to generate class I binding peptides. This is Proteasome subunit beta type-9 (psmb9-a) from Salmo salar (Atlantic salmon).